The sequence spans 474 residues: PRAME family member 8 (474 aa).

One copy of the LRR 1; degenerate repeat lies at 97–122 (QSKLQVLDLRNVDENFCDIFSGATAS). One copy of the LRR 2; degenerate repeat lies at 177–201 (HVCCKELQVFGMPIHSIIEVLNMVE). Residues 202–228 (LDCIQEVEVCCPWELSTLVKFAPYLGQ) form an LRR 3; degenerate repeat. The stretch at 229–264 (MRNLRKLVLFNIRASACIPPDNKGQFIARFTSQFLK) is one LRR 4; degenerate repeat. 5 LRR repeats span residues 265 to 290 (LDYF…LRCL), 291 to 322 (QASL…RQLK), 323 to 341 (ELDL…PLTG), 347 to 374 (VATL…VLSR), and 375 to 399 (CSQL…LLRH).

The protein belongs to the PRAME family.

The sequence is that of PRAME family member 8 from Homo sapiens (Human).